Reading from the N-terminus, the 141-residue chain is UPF0179 protein Cmaq_1008 (141 aa).

It belongs to the UPF0179 family.

The sequence is that of UPF0179 protein Cmaq_1008 from Caldivirga maquilingensis (strain ATCC 700844 / DSM 13496 / JCM 10307 / IC-167).